A 156-amino-acid polypeptide reads, in one-letter code: 3-hydroxyacyl-[acyl-carrier-protein] dehydratase FabZ (156 aa).

Residue H50 is part of the active site.

It belongs to the thioester dehydratase family. FabZ subfamily.

The protein resides in the cytoplasm. The enzyme catalyses a (3R)-hydroxyacyl-[ACP] = a (2E)-enoyl-[ACP] + H2O. Its function is as follows. Involved in unsaturated fatty acids biosynthesis. Catalyzes the dehydration of short chain beta-hydroxyacyl-ACPs and long chain saturated and unsaturated beta-hydroxyacyl-ACPs. This Janthinobacterium sp. (strain Marseille) (Minibacterium massiliensis) protein is 3-hydroxyacyl-[acyl-carrier-protein] dehydratase FabZ.